Consider the following 215-residue polypeptide: 3-demethoxyubiquinol 3-hydroxylase (215 aa).

Fe cation contacts are provided by Glu-64, Glu-94, His-97, Glu-146, Glu-178, and His-181.

Belongs to the COQ7 family. The cofactor is Fe cation.

The protein localises to the cell membrane. It catalyses the reaction a 5-methoxy-2-methyl-3-(all-trans-polyprenyl)benzene-1,4-diol + AH2 + O2 = a 3-demethylubiquinol + A + H2O. It participates in cofactor biosynthesis; ubiquinone biosynthesis. Catalyzes the hydroxylation of 2-nonaprenyl-3-methyl-6-methoxy-1,4-benzoquinol during ubiquinone biosynthesis. The sequence is that of 3-demethoxyubiquinol 3-hydroxylase from Pseudomonas savastanoi pv. phaseolicola (strain 1448A / Race 6) (Pseudomonas syringae pv. phaseolicola (strain 1448A / Race 6)).